A 32-amino-acid polypeptide reads, in one-letter code: Glutathione S-transferase 8.2 (32 aa).

21–22 (QS) is a binding site for glutathione.

Belongs to the GST superfamily. Alpha family. Homodimer. Post-translationally, the N-terminus is blocked.

It is found in the cytoplasm. The catalysed reaction is RX + glutathione = an S-substituted glutathione + a halide anion + H(+). In terms of biological role, conjugation of reduced glutathione to a wide number of exogenous and endogenous hydrophobic electrophiles. This Dicentrarchus labrax (European seabass) protein is Glutathione S-transferase 8.2.